Consider the following 224-residue polypeptide: EEF1A lysine methyltransferase 3 (224 aa).

S-adenosyl-L-methionine-binding positions include Trp58, 84–86, Asp105, Trp134, and Ala151; that span reads GAG.

The protein belongs to the methyltransferase superfamily. METTL21 family.

It is found in the cytoplasm. The protein resides in the cytoskeleton. Its subcellular location is the microtubule organizing center. The protein localises to the centrosome. It carries out the reaction L-lysyl-[protein] + 3 S-adenosyl-L-methionine = N(6),N(6),N(6)-trimethyl-L-lysyl-[protein] + 3 S-adenosyl-L-homocysteine + 3 H(+). The enzyme catalyses L-lysyl-[protein] + S-adenosyl-L-methionine = N(6)-methyl-L-lysyl-[protein] + S-adenosyl-L-homocysteine + H(+). It catalyses the reaction N(6)-methyl-L-lysyl-[protein] + S-adenosyl-L-methionine = N(6),N(6)-dimethyl-L-lysyl-[protein] + S-adenosyl-L-homocysteine + H(+). The catalysed reaction is N(6),N(6)-dimethyl-L-lysyl-[protein] + S-adenosyl-L-methionine = N(6),N(6),N(6)-trimethyl-L-lysyl-[protein] + S-adenosyl-L-homocysteine + H(+). Functionally, protein-lysine methyltransferase that selectively mono-, di- and trimethylates 'Lys-165' of the translation elongation factors EEF1A1 and EEF1A2 in an aminoacyl-tRNA and GTP-dependent manner. EEF1A1 methylation by EEF1AKMT3 is dynamic as well as inducible by stress conditions, such as ER-stress, and plays a regulatory role on mRNA translation. This is EEF1A lysine methyltransferase 3 from Xenopus tropicalis (Western clawed frog).